The primary structure comprises 102 residues: Small ribosomal subunit protein uS10 (102 aa).

It belongs to the universal ribosomal protein uS10 family. In terms of assembly, part of the 30S ribosomal subunit.

In terms of biological role, involved in the binding of tRNA to the ribosomes. The polypeptide is Small ribosomal subunit protein uS10 (Geobacter sulfurreducens (strain ATCC 51573 / DSM 12127 / PCA)).